A 140-amino-acid chain; its full sequence is Natriuretic peptides B (140 aa).

The first 26 residues, Met1–Pro26, serve as a signal peptide directing secretion. The disordered stretch occupies residues Leu71 to Leu94. A disulfide bridge links Cys118 with Cys134.

It belongs to the natriuretic peptide family. In terms of processing, the precursor molecule is proteolytically cleaved by the endoproteases FURIN or CORIN at Arg-108 to produce the brain natriuretic peptide 32. CORIN also cleaves the precursor molecule at additional residues including Arg-105, Arg-108 and possibly Lys-111. Undergoes further proteolytic cleavage by various proteases such as DPP4, MME and possibly FAP, to give rise to a variety of shorter peptides. Cleaved at Pro-110 by the prolyl endopeptidase FAP (seprase) activity (in vitro). Degraded by IDE. During IDE degradation, the resulting products initially increase the activation of NPR1 and can also stimulate NPR2 to produce cGMP before the fragments are completely degraded and inactivated by IDE (in vitro). As to expression, brain and also in atria, but at much lower levels than ANP.

The protein localises to the secreted. Its function is as follows. Cardiac hormone that plays a key role in mediating cardio-renal homeostasis. May also function as a paracrine antifibrotic factor in the heart. Acts by specifically binding and stimulating NPR1 to produce cGMP, which in turn activates effector proteins that drive various biological responses. Involved in regulating the extracellular fluid volume and maintaining the fluid-electrolyte balance through natriuresis, diuresis, vasorelaxation, and inhibition of renin and aldosterone secretion. Binds the clearance receptor NPR3. In terms of biological role, may affect cardio-renal homeostasis. Able to promote the production of cGMP although its potency is very low compared to brain natriuretic peptide 32. This is Natriuretic peptides B (NPPB) from Canis lupus familiaris (Dog).